We begin with the raw amino-acid sequence, 264 residues long: MKQYLDLMKKVLEEGTAKDDRTGTGTRSIFGHQMRFNLQEGFPLVTTKRCHLRSIIHELLWFLNGDTNIKYLHDNGVSIWDEWADENGDLGPVYGKQWRAWGSADGRHIDQLTQVLEQLKGDPDSRRIIVSAWNVGELDKMALAPCHAFFQFYVADGKLSCQLYQRSCDVFLGLPFNIASYALLVHMMAQQCNLDVGDFVWTGGDTHLYNNHLEQTHLQLSREPRALPKLVIKRKPDSLFDYRFEDFEIVDYDPYPGIKAPVAI.

Residue arginine 21 participates in dUMP binding. Position 51 (histidine 51) interacts with (6R)-5,10-methylene-5,6,7,8-tetrahydrofolate. 126–127 (RR) lines the dUMP pocket. Residue cysteine 146 is the Nucleophile of the active site. Residues 166–169 (RSCD), asparagine 177, and 207–209 (HLY) each bind dUMP. Aspartate 169 lines the (6R)-5,10-methylene-5,6,7,8-tetrahydrofolate pocket. Residue alanine 263 coordinates (6R)-5,10-methylene-5,6,7,8-tetrahydrofolate.

The protein belongs to the thymidylate synthase family. Bacterial-type ThyA subfamily. Homodimer.

It localises to the cytoplasm. It catalyses the reaction dUMP + (6R)-5,10-methylene-5,6,7,8-tetrahydrofolate = 7,8-dihydrofolate + dTMP. The protein operates within pyrimidine metabolism; dTTP biosynthesis. In terms of biological role, catalyzes the reductive methylation of 2'-deoxyuridine-5'-monophosphate (dUMP) to 2'-deoxythymidine-5'-monophosphate (dTMP) while utilizing 5,10-methylenetetrahydrofolate (mTHF) as the methyl donor and reductant in the reaction, yielding dihydrofolate (DHF) as a by-product. This enzymatic reaction provides an intracellular de novo source of dTMP, an essential precursor for DNA biosynthesis. This chain is Thymidylate synthase, found in Xenorhabdus nematophila (strain ATCC 19061 / DSM 3370 / CCUG 14189 / LMG 1036 / NCIMB 9965 / AN6).